The sequence spans 107 residues: Late embryogenesis abundant protein M10 (107 aa).

Residues 1-19 (MGNLMSLVLVALLFSLSLA) form the signal peptide.

May be involved in the acquisition of desiccation tolerance during late phase of embryogenesis. This is Late embryogenesis abundant protein M10 from Arabidopsis thaliana (Mouse-ear cress).